We begin with the raw amino-acid sequence, 134 residues long: Sec-independent protein translocase protein TatB (134 aa).

A helical transmembrane segment spans residues 2–22; sequence FDGIGFMELLLIGILGLVVLG. The interval 90–134 is disordered; the sequence is AESVNRPYKVEDTSPVAPKASPDESPSVVEAKSSEATSENSSTPK. Over residues 123-134 the composition is skewed to polar residues; it reads SEATSENSSTPK.

The protein belongs to the TatB family. As to quaternary structure, the Tat system comprises two distinct complexes: a TatABC complex, containing multiple copies of TatA, TatB and TatC subunits, and a separate TatA complex, containing only TatA subunits. Substrates initially bind to the TatABC complex, which probably triggers association of the separate TatA complex to form the active translocon.

It localises to the cell inner membrane. Part of the twin-arginine translocation (Tat) system that transports large folded proteins containing a characteristic twin-arginine motif in their signal peptide across membranes. Together with TatC, TatB is part of a receptor directly interacting with Tat signal peptides. TatB may form an oligomeric binding site that transiently accommodates folded Tat precursor proteins before their translocation. The sequence is that of Sec-independent protein translocase protein TatB from Shewanella frigidimarina (strain NCIMB 400).